The primary structure comprises 459 residues: Probable multidrug resistance protein NorM (459 aa).

12 consecutive transmembrane segments (helical) span residues 20 to 40, 53 to 73, 100 to 120, 132 to 152, 168 to 188, 202 to 222, 252 to 272, 285 to 305, 325 to 345, 358 to 378, 395 to 415, and 423 to 443; these read LTAL…IGFV, LAAV…FMGI, GIWF…AAIT, VEGT…AAMV, LIML…YIFV, CGLA…IYIA, APIG…VFLI, VGIS…SAGT, GVSL…LVLF, AVLS…PADF, VPMF…GYLL, and IYGF…ALVW.

Belongs to the multi antimicrobial extrusion (MATE) (TC 2.A.66.1) family.

It localises to the cell inner membrane. Multidrug efflux pump. This chain is Probable multidrug resistance protein NorM (norM), found in Neisseria meningitidis serogroup A / serotype 4A (strain DSM 15465 / Z2491).